The following is a 573-amino-acid chain: MRASQFFLATQKEAPQEAELASHKLMLRAGLIKRLGSGLYSWMPLGLRVLRKVETIVREEMNRAGALELLMPAVQPKELWEETGRWAVFGPQMLKIRDRHERDFCFGPTHEEVITDIARREIRSYKQLPLNFYQIQTKFRDEIRPRFGVMRAREFVMKDGYSFHTSLESLQQTYDTMYQAYSNIFNRLGLKFRAVRADTGAIGGDGSHEFHVLADSGEDALAYCEHSDFAANVELAEALAPEHPRGEPKEPLREVDTPKQTTCEDVAALLGISLQQTVKSIAVVATDEAGNSQFYLLLLRGDHALNEVKAAKVPGLSSFRFASELEIREYLGCPPGFIGPVGVSTQVNVVADRSVAVMSDFVCGANKPKLHLAGVNFGRDLPEPMIVADIRNVVEGDPSPDGKGCISLCRGIEVGHIFQLRTKYTEAMEATYLDENGQKQFMEMGCYGIGVSRIVGAAIEQGNDERGIIFPAAMAPFSVAIAPIGYDKSEAVQSAAHALYDELSALGIDVLLDDRGERPGVMFADLELIGIPHRIVIGDRGLKEGQVEYQARTAASAETVALADIVSIVRQAL.

It belongs to the class-II aminoacyl-tRNA synthetase family. ProS type 1 subfamily. Homodimer.

It localises to the cytoplasm. It carries out the reaction tRNA(Pro) + L-proline + ATP = L-prolyl-tRNA(Pro) + AMP + diphosphate. Catalyzes the attachment of proline to tRNA(Pro) in a two-step reaction: proline is first activated by ATP to form Pro-AMP and then transferred to the acceptor end of tRNA(Pro). As ProRS can inadvertently accommodate and process non-cognate amino acids such as alanine and cysteine, to avoid such errors it has two additional distinct editing activities against alanine. One activity is designated as 'pretransfer' editing and involves the tRNA(Pro)-independent hydrolysis of activated Ala-AMP. The other activity is designated 'posttransfer' editing and involves deacylation of mischarged Ala-tRNA(Pro). The misacylated Cys-tRNA(Pro) is not edited by ProRS. The protein is Proline--tRNA ligase of Methylobacillus flagellatus (strain ATCC 51484 / DSM 6875 / VKM B-1610 / KT).